The following is a 282-amino-acid chain: Phosphatidylserine decarboxylase proenzyme (282 aa).

Active-site charge relay system; for autoendoproteolytic cleavage activity residues include Asp88, His144, and Ser247. Residue Ser247 is the Schiff-base intermediate with substrate; via pyruvic acid; for decarboxylase activity of the active site. Ser247 is subject to Pyruvic acid (Ser); by autocatalysis.

It belongs to the phosphatidylserine decarboxylase family. PSD-B subfamily. Prokaryotic type I sub-subfamily. In terms of assembly, heterodimer of a large membrane-associated beta subunit and a small pyruvoyl-containing alpha subunit. Pyruvate is required as a cofactor. Post-translationally, is synthesized initially as an inactive proenzyme. Formation of the active enzyme involves a self-maturation process in which the active site pyruvoyl group is generated from an internal serine residue via an autocatalytic post-translational modification. Two non-identical subunits are generated from the proenzyme in this reaction, and the pyruvate is formed at the N-terminus of the alpha chain, which is derived from the carboxyl end of the proenzyme. The autoendoproteolytic cleavage occurs by a canonical serine protease mechanism, in which the side chain hydroxyl group of the serine supplies its oxygen atom to form the C-terminus of the beta chain, while the remainder of the serine residue undergoes an oxidative deamination to produce ammonia and the pyruvoyl prosthetic group on the alpha chain. During this reaction, the Ser that is part of the protease active site of the proenzyme becomes the pyruvoyl prosthetic group, which constitutes an essential element of the active site of the mature decarboxylase.

Its subcellular location is the cell membrane. It carries out the reaction a 1,2-diacyl-sn-glycero-3-phospho-L-serine + H(+) = a 1,2-diacyl-sn-glycero-3-phosphoethanolamine + CO2. Its pathway is phospholipid metabolism; phosphatidylethanolamine biosynthesis; phosphatidylethanolamine from CDP-diacylglycerol: step 2/2. Catalyzes the formation of phosphatidylethanolamine (PtdEtn) from phosphatidylserine (PtdSer). The polypeptide is Phosphatidylserine decarboxylase proenzyme (Xanthomonas campestris pv. campestris (strain B100)).